The chain runs to 607 residues: MKRTHYCNDVRESQIGETVVLEGWINRRRDHGGVIFVDLRDRTGLVQVVFSPELFAEPHAQAHTLRSEYVIRATGKVTARSEGTINPNMDTGRIEVVVEDLTILNSSLPLPFQLDDEISENLRLQYRFLDLRRPDMQRNLMFRHRIMQSVRKHLDGSGFVEVETPMLTRSTPEGARDYLVPSRVNPGDFYALPQSPQLFKQLLMMAGYDRYFQIVRCFRDEDLRADRQPEFTQIDLEMSFVEPNDVMELTESVVVEAFKEALGVSIPQPVRRITYAEAMDKYGLDAPDMRITMELKDLTEVMKSSEFKVFRQAATLEGRGNEHGLVKVLKVPGGGSLTRKQIDTYTEFVGIYGAKGLAYIKVNGPWQEDGWQSPIVKFLGDAEKQAIQEATQAQVGDLLFFGADKASVVNESLGRLRVKLGKELEMLCDEKFAFVWVTDFPLLDWDNEARRNTAVHHPFTAPHPDDIIYLENADGASVEHPLEKVRSLAYDLVLNGTEVGGGSIRIHDTMLQRRMLELLEIGEEEAEGKFGFLLRALQYGAPPHGGLALGLDRLVTLMLGLDSIRDVIAFPKTQKATCLMTEAPSKVDGAQLKELHLRSTFKPKTAE.

Glu-173 contributes to the L-aspartate binding site. Residues 197 to 200 are aspartate; that stretch reads QLFK. L-aspartate is bound at residue Arg-219. ATP-binding positions include 219 to 221 and Gln-228; that span reads RDE. His-456 contributes to the L-aspartate binding site. ATP is bound at residue Glu-498. Residue Arg-505 participates in L-aspartate binding. 550-553 contributes to the ATP binding site; that stretch reads GLDR.

The protein belongs to the class-II aminoacyl-tRNA synthetase family. Type 1 subfamily. In terms of assembly, homodimer.

The protein localises to the cytoplasm. It carries out the reaction tRNA(Asx) + L-aspartate + ATP = L-aspartyl-tRNA(Asx) + AMP + diphosphate. Aspartyl-tRNA synthetase with relaxed tRNA specificity since it is able to aspartylate not only its cognate tRNA(Asp) but also tRNA(Asn). Reaction proceeds in two steps: L-aspartate is first activated by ATP to form Asp-AMP and then transferred to the acceptor end of tRNA(Asp/Asn). The chain is Aspartate--tRNA(Asp/Asn) ligase from Magnetococcus marinus (strain ATCC BAA-1437 / JCM 17883 / MC-1).